A 621-amino-acid polypeptide reads, in one-letter code: Solute carrier family 2, facilitated glucose transporter member 12 (621 aa).

The Cytoplasmic segment spans residues 1–48; that stretch reads MVPVENTEGPNLLNQKGTAVETEGSYRASGSRHPPWARGCGMFTFLSS. The helical transmembrane segment at 49–69 threads the bilayer; it reads VTAAVSGLLVGYELGIISGAL. At 70–84 the chain is on the extracellular side; it reads LQIKTLLTLSCHEQE. Residues 85–105 form a helical membrane-spanning segment; that stretch reads MVVSSLLIGALLASLTGGVLI. Residues 106 to 119 lie on the Cytoplasmic side of the membrane; that stretch reads DRYGRRTAIILSSC. Residues 120–140 traverse the membrane as a helical segment; the sequence is LLGLGSLVLILSLSYTVLIVG. Arginine 141 is a topological domain (extracellular). Residues 142–162 form a helical membrane-spanning segment; the sequence is IAIGVSISLSSIATCVYIAEI. Residues 163–176 lie on the Cytoplasmic side of the membrane; that stretch reads APQHRRGLLVSLNE. The chain crosses the membrane as a helical span at residues 177–197; the sequence is LMIVIGILSAYISNYAFANVF. Residues 198–201 are Extracellular-facing; the sequence is HGWK. The helical transmembrane segment at 202–222 threads the bilayer; that stretch reads YMFGLVIPLGILQAIAMYFLP. Topologically, residues 223–282 are cytoplasmic; sequence PSPRFLVMKGQEGAASKVLGRLRALSDATEELTVIKSSLKDEYQYSFWDLFRSKDNMRTR. Residues 283–303 traverse the membrane as a helical segment; that stretch reads IMIGLTLVFFVQITGQPNILF. The Extracellular segment spans residues 304-321; the sequence is YASTVLKSVGFQSNEAAS. The helical transmembrane segment at 322–342 threads the bilayer; that stretch reads LASTGVGVVKVISTIPATLLV. Topologically, residues 343 to 349 are cytoplasmic; that stretch reads DHVGSKT. The helical transmembrane segment at 350–370 threads the bilayer; sequence FLCIGSSVMAASLVTMGIVNL. Topologically, residues 371 to 470 are extracellular; it reads NIHMNFTNIC…PAFLKWLSLA (100 aa). N-linked (GlcNAc...) asparagine glycans are attached at residues asparagine 375, asparagine 387, asparagine 400, and asparagine 405. Residues 471 to 491 form a helical membrane-spanning segment; the sequence is SLLVYVAAFSIGLGPMPWLVL. Residues 492-502 lie on the Cytoplasmic side of the membrane; sequence SEIFPGGIRGR. A helical membrane pass occupies residues 503-523; that stretch reads AMALTSSMNWGINLLISLTFL. Over 524-532 the chain is Extracellular; it reads TVTDLIGLP. Residues 533-553 traverse the membrane as a helical segment; that stretch reads WVCFIYTIMSLASLLFVVMFI. Topologically, residues 554–621 are cytoplasmic; the sequence is PETKGCSLEQ…GQSRQLSPEN (68 aa).

Belongs to the major facilitator superfamily. Sugar transporter (TC 2.A.1.1) family. Glucose transporter subfamily.

It localises to the cell membrane. The protein localises to the endomembrane system. The protein resides in the cytoplasm. Its subcellular location is the perinuclear region. It catalyses the reaction D-glucose(out) = D-glucose(in). In terms of biological role, insulin-independent facilitative glucose transporter. This chain is Solute carrier family 2, facilitated glucose transporter member 12, found in Macaca fascicularis (Crab-eating macaque).